Here is a 246-residue protein sequence, read N- to C-terminus: Small ribosomal subunit protein uS2 (246 aa).

Belongs to the universal ribosomal protein uS2 family.

This chain is Small ribosomal subunit protein uS2, found in Chromohalobacter salexigens (strain ATCC BAA-138 / DSM 3043 / CIP 106854 / NCIMB 13768 / 1H11).